A 148-amino-acid polypeptide reads, in one-letter code: Probable glucosamine 6-phosphate N-acetyltransferase (148 aa).

One can recognise an N-acetyltransferase domain in the interval 3 to 148 (ISINELNFDD…KQMALYLNGK (146 aa)). Residues Thr-25, 72–75 (KFIH), and 84–86 (EDV) contribute to the substrate site. Acetyl-CoA is bound by residues 86–88 (VVV) and 94–99 (LHGIGK). Residues 115-116 (YK) and Asp-120 contribute to the substrate site. 129–131 (YCK) contacts acetyl-CoA. Residue Glu-138 participates in substrate binding.

The protein belongs to the acetyltransferase family. GNA1 subfamily.

The catalysed reaction is D-glucosamine 6-phosphate + acetyl-CoA = N-acetyl-D-glucosamine 6-phosphate + CoA + H(+). It functions in the pathway nucleotide-sugar biosynthesis; UDP-N-acetyl-alpha-D-glucosamine biosynthesis; N-acetyl-alpha-D-glucosamine 1-phosphate from alpha-D-glucosamine 6-phosphate (route I): step 1/2. The polypeptide is Probable glucosamine 6-phosphate N-acetyltransferase (Acanthamoeba polyphaga (Amoeba)).